The following is a 118-amino-acid chain: Succinate dehydrogenase assembly factor 1, mitochondrial (118 aa).

The LYR motif 1; required for interaction with HSC20 signature appears at 14–16; it reads LYR. Positions 53–55 match the LYR motif 2; not required for interaction with HSC20 motif; that stretch reads LYR. Positions 53–65 are interaction with SDHB; the sequence is LYRRGRRQLQMLR. A disordered region spans residues 72–118; sequence MGAFVRTRGPTEESNGAGAPGTLSGEGDDPRKPLDSMRTPKTPLDGR.

This sequence belongs to the complex I LYR family. SDHAF1 subfamily. Interacts with SDHB within an SDHA-SDHB subcomplex. Also interacts with the iron-sulfur transfer complex formed by HSC20, HSPA9 and ISCU through direct binding to HSC20. Binding of SDHAF1 to SDHB precedes and is necessary for recruitment of the iron-sulfur transfer complex by SDHAF1.

Its subcellular location is the mitochondrion matrix. Its function is as follows. Plays an essential role in the assembly of succinate dehydrogenase (SDH), an enzyme complex (also referred to as respiratory complex II) that is a component of both the tricarboxylic acid (TCA) cycle and the mitochondrial electron transport chain, and which couples the oxidation of succinate to fumarate with the reduction of ubiquinone (coenzyme Q) to ubiquinol. Promotes maturation of the iron-sulfur protein subunit SDHB of the SDH catalytic dimer, protecting it from the deleterious effects of oxidants. May act together with SDHAF3. Contributes to iron-sulfur cluster incorporation into SDHB by binding to SDHB and recruiting the iron-sulfur transfer complex formed by HSC20, HSPA9 and ISCU through direct binding to HSC20. This Bos taurus (Bovine) protein is Succinate dehydrogenase assembly factor 1, mitochondrial.